A 164-amino-acid polypeptide reads, in one-letter code: MSVNMDELRHQVMINQFVLAAGCAADQAKQLLQAAHWQFETALSTFFQETNIPNSHHHHQMMCTPSNTPATPPNFPDALAMFSKLRASEGLQSSNSPMTAAACSPPANFSPFWASSPPSHQAPWIPPSSPTTFHHLHRPQPTWPPGAQQGGAQQKAMAAMDGQR.

An N-acetylserine modification is found at S2. Positions 128 to 164 (SSPTTFHHLHRPQPTWPPGAQQGGAQQKAMAAMDGQR) are disordered. Low complexity predominate over residues 146 to 164 (GAQQGGAQQKAMAAMDGQR).

This sequence belongs to the UBALD family.

This Homo sapiens (Human) protein is UBA-like domain-containing protein 2 (UBALD2).